Here is a 120-residue protein sequence, read N- to C-terminus: Spermidine export protein MdtJ (120 aa).

The next 4 helical transmembrane spans lie at 1–21 (MFYW…TLSM), 31–51 (TGFI…SFAV), 54–74 (IALG…ITLF), and 81–101 (EALS…IALI).

The protein belongs to the drug/metabolite transporter (DMT) superfamily. Small multidrug resistance (SMR) (TC 2.A.7.1) family. MdtJ subfamily. As to quaternary structure, forms a complex with MdtI.

It is found in the cell inner membrane. In terms of biological role, catalyzes the excretion of spermidine. The chain is Spermidine export protein MdtJ from Citrobacter koseri (strain ATCC BAA-895 / CDC 4225-83 / SGSC4696).